Consider the following 549-residue polypeptide: MFCEQCEQTASGNGCHQWGACGKSPEVNAVQDLLIYCLRGLATVVLKARENHIPTQKMDVFICEALFATMTNVNFNNKSLTEYLKTCINLREKLKQTLEETLNTPPSWSDLSNYQPDWEDSLVTQGETLVHRFISRSSNDLDIISLKLTVLYGLKGVASYTFHAQELGQEDEKVYQFIEDALVKLERTDLSLQEWIDLALKVGEINLRAMELLDAGHTQTYGHPTPTQVPLNPKKGKAILVSGHDIRQLEAILQQTADKDITVYTHGELLPAHGYPKLKQNYPHLYGHYGTAWQNQTKDFAKFPGAIIITTNCLMPPHETYDEKLFTIGPVSYPHLTYLPPTETGIPDYSPAIKKACLMPGFTEETEPRHVMVGFARNTVLSVSDQVIEGVKTGKIRHFFLVGGCDGAKPGRTYYTELVEKVPSDCIVLTLACGKFRFFDKQLGEIEGLPRLMDVGQCNDAYSAIQIALGLANAFNVSVNEIPLSLILSWYEQKAIAVLLTLLYLGIQNIRLGPTLPAFITPNVLQFLQDNYHLQPITTPDEDLAACLN.

[4Fe-4S] cluster is bound by residues Cys3, Cys6, Cys15, and Cys21. Hybrid [4Fe-2O-2S] cluster is bound by residues His244, Glu268, Cys313, Cys405, Cys433, Cys458, Glu492, and Lys494. At Cys405 the chain carries Cysteine persulfide.

Belongs to the HCP family. Requires [4Fe-4S] cluster as cofactor. Hybrid [4Fe-2O-2S] cluster is required as a cofactor.

The protein localises to the cytoplasm. The catalysed reaction is A + NH4(+) + H2O = hydroxylamine + AH2 + H(+). In terms of biological role, catalyzes the reduction of hydroxylamine to form NH(3) and H(2)O. The protein is Hydroxylamine reductase of Gloeothece citriformis (strain PCC 7424) (Cyanothece sp. (strain PCC 7424)).